The primary structure comprises 83 residues: Large ribosomal subunit protein bL31B (83 aa).

This sequence belongs to the bacterial ribosomal protein bL31 family. Type B subfamily. As to quaternary structure, part of the 50S ribosomal subunit.

The sequence is that of Large ribosomal subunit protein bL31B from Lactobacillus gasseri (strain ATCC 33323 / DSM 20243 / BCRC 14619 / CIP 102991 / JCM 1131 / KCTC 3163 / NCIMB 11718 / NCTC 13722 / AM63).